Consider the following 256-residue polypeptide: Ubiquinone/menaquinone biosynthesis C-methyltransferase UbiE (256 aa).

The segment covering Met1–Gly19 has biased composition (polar residues). Residues Met1–Pro24 are disordered. S-adenosyl-L-methionine contacts are provided by residues Thr81, Asp102, and Asp128–Ala129.

Belongs to the class I-like SAM-binding methyltransferase superfamily. MenG/UbiE family.

The enzyme catalyses a 2-demethylmenaquinol + S-adenosyl-L-methionine = a menaquinol + S-adenosyl-L-homocysteine + H(+). It catalyses the reaction a 2-methoxy-6-(all-trans-polyprenyl)benzene-1,4-diol + S-adenosyl-L-methionine = a 5-methoxy-2-methyl-3-(all-trans-polyprenyl)benzene-1,4-diol + S-adenosyl-L-homocysteine + H(+). The protein operates within quinol/quinone metabolism; menaquinone biosynthesis; menaquinol from 1,4-dihydroxy-2-naphthoate: step 2/2. It functions in the pathway cofactor biosynthesis; ubiquinone biosynthesis. Functionally, methyltransferase required for the conversion of demethylmenaquinol (DMKH2) to menaquinol (MKH2) and the conversion of 2-polyprenyl-6-methoxy-1,4-benzoquinol (DDMQH2) to 2-polyprenyl-3-methyl-6-methoxy-1,4-benzoquinol (DMQH2). The chain is Ubiquinone/menaquinone biosynthesis C-methyltransferase UbiE from Bordetella avium (strain 197N).